Reading from the N-terminus, the 97-residue chain is Co-chaperonin GroES (97 aa).

Belongs to the GroES chaperonin family. Heptamer of 7 subunits arranged in a ring. Interacts with the chaperonin GroEL.

It localises to the cytoplasm. In terms of biological role, together with the chaperonin GroEL, plays an essential role in assisting protein folding. The GroEL-GroES system forms a nano-cage that allows encapsulation of the non-native substrate proteins and provides a physical environment optimized to promote and accelerate protein folding. GroES binds to the apical surface of the GroEL ring, thereby capping the opening of the GroEL channel. This chain is Co-chaperonin GroES, found in Buchnera aphidicola subsp. Tuberolachnus salignus.